A 114-amino-acid chain; its full sequence is Large ribosomal subunit protein bL20 (114 aa).

Belongs to the bacterial ribosomal protein bL20 family.

Binds directly to 23S ribosomal RNA and is necessary for the in vitro assembly process of the 50S ribosomal subunit. It is not involved in the protein synthesizing functions of that subunit. The polypeptide is Large ribosomal subunit protein bL20 (Amoebophilus asiaticus (strain 5a2)).